The chain runs to 115 residues: Ribosome-binding factor A (115 aa).

Belongs to the RbfA family. As to quaternary structure, monomer. Binds 30S ribosomal subunits, but not 50S ribosomal subunits or 70S ribosomes.

The protein resides in the cytoplasm. Functionally, one of several proteins that assist in the late maturation steps of the functional core of the 30S ribosomal subunit. Associates with free 30S ribosomal subunits (but not with 30S subunits that are part of 70S ribosomes or polysomes). Required for efficient processing of 16S rRNA. May interact with the 5'-terminal helix region of 16S rRNA. This is Ribosome-binding factor A from Staphylococcus carnosus (strain TM300).